The chain runs to 365 residues: Chorismate synthase (365 aa).

2 residues coordinate NADP(+): arginine 48 and arginine 54. FMN-binding positions include 125-127 (RSS), 238-239 (NA), glycine 278, 293-297 (KPTSS), and arginine 319.

The protein belongs to the chorismate synthase family. Homotetramer. FMNH2 serves as cofactor.

It carries out the reaction 5-O-(1-carboxyvinyl)-3-phosphoshikimate = chorismate + phosphate. It functions in the pathway metabolic intermediate biosynthesis; chorismate biosynthesis; chorismate from D-erythrose 4-phosphate and phosphoenolpyruvate: step 7/7. Functionally, catalyzes the anti-1,4-elimination of the C-3 phosphate and the C-6 proR hydrogen from 5-enolpyruvylshikimate-3-phosphate (EPSP) to yield chorismate, which is the branch point compound that serves as the starting substrate for the three terminal pathways of aromatic amino acid biosynthesis. This reaction introduces a second double bond into the aromatic ring system. This is Chorismate synthase from Alteromonas mediterranea (strain DSM 17117 / CIP 110805 / LMG 28347 / Deep ecotype).